The following is a 613-amino-acid chain: RNA polymerase-associated protein RTF1 homolog (613 aa).

Disordered stretches follow at residues 1–90 (MSSS…DKAR) and 121–247 (QQLA…KDKI). Residues 55–68 (PAKKKTLTKRKRRA) are compositionally biased toward basic residues. Acidic residues predominate over residues 72–81 (SDDDQVDDDL). Residues 167 to 176 (AAFHRPSDIN) are compositionally biased toward basic and acidic residues. Positions 175–209 (INRKHKEKNAMDALKNKRKEIEKKNAKNEALSIDA) form a coiled coil. Residues 215-235 (SGSSSSSSSSESSRSSSSSRE) are compositionally biased toward low complexity. The segment covering 236–247 (SSPERVSEKDKI) has biased composition (basic and acidic residues). The region spanning 252–383 (VDGLSELRRA…KKQDIEKAIN (132 aa)) is the Plus3 domain. Residues 425–462 (RGDIREAEQIQTKIDEIERQADELEKERSKSISAIAFI) are a coiled coil. Disordered stretches follow at residues 485–549 (SQDD…KTDI) and 564–613 (LKDF…SSAV). The segment covering 510–521 (TLSASSSTTNLS) has biased composition (low complexity). The segment covering 569-586 (TPESSGNKRPSISSSKGV) has biased composition (polar residues). A compositionally biased stretch (low complexity) spans 602-613 (GSSTSAAPSSAV).

In terms of assembly, component of the PAF1 complex which consists of at least cdc-73, ctr-9, leo-1, pafo-1 and rtfo-1.

It is found in the nucleus. Its function is as follows. Component of the PAF1 complex which is a multifunctional complex involved in transcription initiation via genetic interactions with TATA-binding proteins, elongation and transcription-coupled histone modification. The protein is RNA polymerase-associated protein RTF1 homolog of Caenorhabditis elegans.